The following is a 448-amino-acid chain: Homogentisate 1,2-dioxygenase (448 aa).

The active-site Proton acceptor is histidine 303. 2 residues coordinate Fe cation: histidine 346 and glutamate 352. 2 residues coordinate homogentisate: tyrosine 361 and histidine 382. Histidine 382 lines the Fe cation pocket.

It belongs to the homogentisate dioxygenase family. Hexamer; dimer of trimers. Fe cation serves as cofactor.

It catalyses the reaction homogentisate + O2 = 4-maleylacetoacetate + H(+). It functions in the pathway amino-acid degradation; L-phenylalanine degradation; acetoacetate and fumarate from L-phenylalanine: step 4/6. In terms of biological role, involved in the catabolism of homogentisate (2,5-dihydroxyphenylacetate or 2,5-OH-PhAc), a central intermediate in the degradation of phenylalanine and tyrosine. Catalyzes the oxidative ring cleavage of the aromatic ring of homogentisate to yield maleylacetoacetate. The chain is Homogentisate 1,2-dioxygenase from Rhodopseudomonas palustris (strain TIE-1).